A 59-amino-acid polypeptide reads, in one-letter code: Potassium channel toxin alpha-KTx 1.14 (59 aa).

Positions 1–22 are cleaved as a signal peptide; the sequence is MKKISFLLLLAIVICSIGWTDG. At Gln-23 the chain carries Pyrrolidone carboxylic acid. Cystine bridges form between Cys-29/Cys-50, Cys-35/Cys-55, and Cys-39/Cys-57.

The protein belongs to the short scorpion toxin superfamily. Potassium channel inhibitor family. Alpha-KTx 01 subfamily. Expressed by the venom gland.

Its subcellular location is the secreted. Its function is as follows. Potent blocker of both large-conductance calcium-activated potassium channels (KCa1.1/KCNMA1) and voltage-gated potassium channels (Kv1.3/KCNA3 and ERG1/Kv11.1/KCNH2). In Olivierus martensii (Manchurian scorpion), this protein is Potassium channel toxin alpha-KTx 1.14.